A 137-amino-acid polypeptide reads, in one-letter code: uncharacterized protein (137 aa).

Residues 30-105 (SLLCVFTALR…IRFIQIPDKI (76 aa)) enclose the Sm domain.

This is an uncharacterized protein from Dictyostelium discoideum (Social amoeba).